The chain runs to 238 residues: NADH-quinone oxidoreductase subunit C (238 aa).

The segment at 1 to 20 (MSSPDQNPSDAAGQTGSSNE) is disordered.

This sequence belongs to the complex I 30 kDa subunit family. NDH-1 is composed of 14 different subunits. Subunits NuoB, C, D, E, F, and G constitute the peripheral sector of the complex.

The protein resides in the cell membrane. The enzyme catalyses a quinone + NADH + 5 H(+)(in) = a quinol + NAD(+) + 4 H(+)(out). Functionally, NDH-1 shuttles electrons from NADH, via FMN and iron-sulfur (Fe-S) centers, to quinones in the respiratory chain. The immediate electron acceptor for the enzyme in this species is believed to be a menaquinone. Couples the redox reaction to proton translocation (for every two electrons transferred, four hydrogen ions are translocated across the cytoplasmic membrane), and thus conserves the redox energy in a proton gradient. This chain is NADH-quinone oxidoreductase subunit C, found in Mycobacterium marinum (strain ATCC BAA-535 / M).